A 579-amino-acid chain; its full sequence is Mitogen-activated protein kinase kinase kinase 7 (579 aa).

The interval 1-300 (MSTASAASSS…FPGADEPLQY (300 aa)) is interaction with MAPK8IP1. Positions 36–291 (IEVEEVVGRG…KIMTHLMRYF (256 aa)) constitute a Protein kinase domain. ATP contacts are provided by residues 42–50 (VGRGAFGVV) and Lys-63. Lys-72 is covalently cross-linked (Glycyl lysine isopeptide (Lys-Gly) (interchain with G-Cter in ubiquitin)). Residue Asp-156 is the Proton acceptor of the active site. A Glycyl lysine isopeptide (Lys-Gly) (interchain with G-Cter in ubiquitin) cross-link involves residue Lys-158. Phosphothreonine; by autocatalysis occurs at positions 184 and 187. A Phosphoserine; by autocatalysis modification is found at Ser-192. Lys-209 participates in a covalent cross-link: Glycyl lysine isopeptide (Lys-Gly) (interchain with G-Cter in ubiquitin). Disordered regions lie at residues 301-339 (PCQY…EQVP) and 354-391 (KNQA…MSAD). Positions 306–322 (DEGQSNSATSTGSFMDI) are enriched in polar residues. 2 stretches are compositionally biased toward low complexity: residues 323–334 (TSTNTSNKSDTN) and 361–375 (SESG…RGSS). Ser-367, Ser-389, and Ser-412 each carry phosphoserine. Polar residues predominate over residues 416-425 (LTVTGTDPGQ). Positions 416 to 466 (LTVTGTDPGQVSSRSSSPSVRMITTSGPTSEKPARSHPWTPDDSTDTNGSD) are disordered. Residues 426–436 (VSSRSSSPSVR) are compositionally biased toward low complexity. Ser-428 bears the Phosphoserine mark.

This sequence belongs to the protein kinase superfamily. STE Ser/Thr protein kinase family. MAP kinase kinase kinase subfamily. In terms of assembly, can form homodimer. Binds both upstream activators and downstream substrates in multimolecular complexes. Interacts with TAB1/MAP3K7IP1, TAB2/MAP3K7IP2 and TAB3/MAP3K7IP3. Identified in the TRIKA2 complex composed of MAP3K7/TAK1, TAB1/MAP3K7IP1 and TAB2/MAP3K7IP2. Interacts with PPM1L and PPM1B/PP2CB. Interaction with PP2A and PPP6C leads to its repressed activity. Interacts with TRAF6 and TAB1/MAP3K7IP1; during IL-1 signaling. Interacts with TAOK1 and TAOK2; interaction with TAOK2 interferes with MAP3K7 interaction with IKKA, thus preventing NF-kappa-B activation. Interacts with DYNC2I2 (via WD domains). Interacts with CYLD and RBCK1. Interacts with TGFBR1; induces MAP3K7/TAK1 activation by TRAF6. Interacts with MAPK8IP1 and SMAD6. Interacts with isoform 1 of VRK2. Interacts with DAB2; the interaction is induced by TGF-beta stimulation and may mediate TGF-beta stimulated JNK activation. Interacts with TRIM5. Part of a complex containing ITCH, NDFIP1 and MAP3K7. Interacts with IFIT5; the interaction synergizes the recruitment of IKK to MAP3K7 and enhances IKK phosphorylation. Interacts with PLEKHM1 (via N- and C-terminus). Found in a complex with SH3RF1, RAC2, MAP2K7/MKK7, MAPK8IP1/JIP1, MAPK8/JNK1 and MAPK9/JNK2. Interacts with SASH1. Interacts with RIPK1. The cofactor is Mg(2+). Association with TAB1/MAP3K7IP1 promotes autophosphorylation at Ser-192 and subsequent activation. Association with TAB2/MAP3K7IP2, itself associated with free unanchored Lys-63 polyubiquitin chain, promotes autophosphorylation and subsequent activation of MAP3K7. Dephosphorylation at Ser-192 by PPM1B/PP2CB and at Thr-187 by PP2A and PPP6C leads to inactivation. Post-translationally, 'Lys-48'-linked polyubiquitination at Lys-72 is induced by TNFalpha, and leads to proteasomal degradation. Undergoes 'Lys-48'-linked polyubiquitination catalyzed by ITCH. 'Lys-63'-linked polyubiquitination at Lys-158 by TRIM8 does not lead to proteasomal degradation but contributes to autophosphorylation and activation. Deubiquitinated by CYLD, a protease that selectively cleaves 'Lys-63'-linked ubiquitin chains. Deubiquitinated by USP19; leading to negative regulation of TNF-alpha- and IL-1beta-triggered NF-kappa-B activation.

The protein resides in the cytoplasm. It is found in the cell membrane. The enzyme catalyses L-seryl-[protein] + ATP = O-phospho-L-seryl-[protein] + ADP + H(+). The catalysed reaction is L-threonyl-[protein] + ATP = O-phospho-L-threonyl-[protein] + ADP + H(+). Activated by pro-inflammatory cytokines and in response to physical and chemical stresses, including osmotic stress, oxidative stress, arsenic and ultraviolet light irradiation. Activated by 'Lys-63'-linked polyubiquitination and by autophosphorylation. Association with TAB1/MAP3K7IP1 and TAB2/MAP3K7IP2 promotes activation through autophosphorylation, whereas PPM1B/PP2CB, PP2A and PPP6C dephosphorylation leads to inactivation. Ceramides are also able to activate MAP3K7/TAK1. Serine/threonine kinase which acts as an essential component of the MAP kinase signal transduction pathway. Plays an important role in the cascades of cellular responses evoked by changes in the environment. Mediates signal transduction of TRAF6, various cytokines including interleukin-1 (IL-1), transforming growth factor-beta (TGFB), TGFB-related factors like BMP2 and BMP4, toll-like receptors (TLR), tumor necrosis factor receptor CD40 and B-cell receptor (BCR). Once activated, acts as an upstream activator of the MKK/JNK signal transduction cascade and the p38 MAPK signal transduction cascade through the phosphorylation and activation of several MAP kinase kinases like MAP2K1/MEK1, MAP2K3/MKK3, MAP2K6/MKK6 and MAP2K7/MKK7. These MAP2Ks in turn activate p38 MAPKs and c-jun N-terminal kinases (JNKs); both p38 MAPK and JNK pathways control the transcription factors activator protein-1 (AP-1). Independently of MAP2Ks and p38 MAPKs, acts as a key activator of NF-kappa-B by promoting activation of the I-kappa-B-kinase (IKK) core complex. Mechanistically, recruited to polyubiquitin chains of RIPK2 and IKBKG/NEMO via TAB2/MAP3K7IP2 and TAB3/MAP3K7IP3, and catalyzes phosphorylation and activation of IKBKB/IKKB component of the IKK complex, leading to NF-kappa-B activation. In osmotic stress signaling, plays a major role in the activation of MAPK8/JNK1, but not that of NF-kappa-B. Promotes TRIM5 capsid-specific restriction activity. Phosphorylates RIPK1 at 'Ser-321' which positively regulates RIPK1 interaction with RIPK3 to promote necroptosis but negatively regulates RIPK1 kinase activity and its interaction with FADD to mediate apoptosis. Phosphorylates STING1 in response to cGAMP-activation, promoting association between STEEP1 and STING1 and STING1 translocation to COPII vesicles. The polypeptide is Mitogen-activated protein kinase kinase kinase 7 (MAP3K7) (Bos taurus (Bovine)).